The sequence spans 883 residues: Coatomer subunit gamma (883 aa).

Residues 1 to 25 (MNYFSLTSHKKHRGHPSAGPSNAYQ) form a disordered region. HEAT repeat units lie at residues 69–106 (REAT…IAED), 292–329 (RMLS…THPA), 331–364 (VTTC…GAES), 365–401 (SVER…KYPR), 404–439 (TVLM…ENAD), and 476–513 (ATPS…SCPA).

Belongs to the COPG family. As to quaternary structure, oligomeric complex that consists of at least the alpha, beta, beta', gamma, delta, epsilon and zeta subunits. Expressed in ovary, testis, testis tip, young spermatocytes, germ cells and follicle cells. Up-regulated expression within centrally to posteriorly located germarial cysts and in migrating follicle cells. Widespread expression in imaginal disks including eye-antennal disk, wing disk, third leg and haltere disk.

It localises to the cytoplasm. The protein resides in the golgi apparatus membrane. It is found in the cytoplasmic vesicle. The protein localises to the COPI-coated vesicle membrane. Its subcellular location is the endoplasmic reticulum. Functionally, the coatomer is a cytosolic protein complex that binds to dilysine motifs and reversibly associates with Golgi non-clathrin-coated vesicles, which further mediate biosynthetic protein transport from the ER, via the Golgi up to the trans Golgi network. Coatomer complex is required for budding from Golgi membranes, and is essential for the retrograde Golgi-to-ER transport of dilysine-tagged proteins. Required for limiting lipid storage in lipid droplets. Involved in the expansion of luminal extracellular matrices and apical membrane during tubulogenesis. Required in the tracheal epithelium for luminal protein secretion and diametric tube growth. In salivary glands, required for deposition of O-glycans and luminal extracellular matrix assembly. Required for epidermal morphogenesis and cuticle development. The protein is Coatomer subunit gamma of Drosophila melanogaster (Fruit fly).